Reading from the N-terminus, the 335-residue chain is MASPRWFWSVCAIAAVALLLVSKVPSASAQRKKEMVLSEKVSQLMEWANKRPVIRMNGDKFRRLVKAPPRNYSVVVMFTALQLHRQCVVCKQADEEFQILANSWRYSNAFTNRIFFAMVDFDEGSDVFQMLNMNSAPTFINFPPKGKPKRADTYELQVRGFSAEQIARWIADRTDVNIRVIRPPNYAGPLMLGLLLAVIGGLVYLRRSNMEFLFNKTGWAFAALCFVLAMTSGQMWNHIRGPPYAHKNPHTGHVNYIHGSSQAQFVAETHIVLLFNGGVTLGMVLLCEAATSDMDIGKRRMMCIAGIGLVVLFFSWMLSIFRSKYHGYPYSFLMS.

The N-terminal stretch at 1-29 (MASPRWFWSVCAIAAVALLLVSKVPSASA) is a signal peptide. Over 30-184 (QRKKEMVLSE…DVNIRVIRPP (155 aa)) the chain is Extracellular. The Thioredoxin domain occupies 47–175 (WANKRPVIRM…IARWIADRTD (129 aa)). Residue asparagine 71 is glycosylated (N-linked (GlcNAc...) asparagine). Cysteine 87 and cysteine 90 are disulfide-bonded. A helical membrane pass occupies residues 185–205 (NYAGPLMLGLLLAVIGGLVYL). Residues 206–209 (RRSN) lie on the Cytoplasmic side of the membrane. A helical transmembrane segment spans residues 210-230 (MEFLFNKTGWAFAALCFVLAM). Topologically, residues 231-270 (TSGQMWNHIRGPPYAHKNPHTGHVNYIHGSSQAQFVAETH) are extracellular. Residues 271 to 291 (IVLLFNGGVTLGMVLLCEAAT) traverse the membrane as a helical segment. The Cytoplasmic segment spans residues 292-300 (SDMDIGKRR). A helical membrane pass occupies residues 301 to 321 (MMCIAGIGLVVLFFSWMLSIF). Over 322 to 335 (RSKYHGYPYSFLMS) the chain is Extracellular.

Belongs to the OST3/OST6 family. In terms of assembly, accessory component of the STT3B-containing form of the oligosaccharyltransferase (OST) complex. OST exists in two different complex forms which contain common core subunits RPN1, RPN2, OST48, OST4, DAD1 and TMEM258, either STT3A or STT3B as catalytic subunits, and form-specific accessory subunits. OST can form stable complexes with the Sec61 complex or with both the Sec61 and TRAP complexes. The association of TUSC3 or MAGT1 with the STT3B-containing complex seems to be mutually exclusvice. In terms of tissue distribution, expressed at high levels in kidney, colon, heart and liver. Expressed at lower levels in intestine, spleen, brain and lung.

The protein resides in the cell membrane. The protein localises to the endoplasmic reticulum. It is found in the endoplasmic reticulum membrane. The protein operates within protein modification; protein glycosylation. Accessory component of the STT3B-containing form of the N-oligosaccharyl transferase (OST) complex which catalyzes the transfer of a high mannose oligosaccharide from a lipid-linked oligosaccharide donor to an asparagine residue within an Asn-X-Ser/Thr consensus motif in nascent polypeptide chains. Involved in N-glycosylation of STT3B-dependent substrates. Specifically required for the glycosylation of a subset of acceptor sites that are near cysteine residues; in this function seems to act redundantly with TUSC3. In its oxidized form proposed to form transient mixed disulfides with a glycoprotein substrate to facilitate access of STT3B to the unmodified acceptor site. Also has oxidoreductase-independent functions in the STT3B-containing OST complex possibly involving substrate recognition. Could indirectly play a role in Mg(2+) transport in epithelial cells. The sequence is that of Dolichyl-diphosphooligosaccharide--protein glycosyltransferase subunit MAGT1 from Mus musculus (Mouse).